Consider the following 267-residue polypeptide: Acetyl-coenzyme A carboxylase carboxyl transferase subunit beta 1 (267 aa).

The CoA carboxyltransferase N-terminal domain occupies 9 to 267; it reads TWQACPKCGR…NYGIGRSAHG (259 aa). Residues C13, C16, C31, and C34 each coordinate Zn(2+). The C4-type zinc finger occupies 13 to 34; it reads CPKCGRHVHQRQWGTYQQCPYC.

The protein belongs to the AccD/PCCB family. Acetyl-CoA carboxylase is a heterohexamer composed of biotin carboxyl carrier protein (AccB), biotin carboxylase (AccC) and two subunits each of ACCase subunit alpha (AccA) and ACCase subunit beta (AccD). Requires Zn(2+) as cofactor.

Its subcellular location is the cytoplasm. The catalysed reaction is N(6)-carboxybiotinyl-L-lysyl-[protein] + acetyl-CoA = N(6)-biotinyl-L-lysyl-[protein] + malonyl-CoA. The protein operates within lipid metabolism; malonyl-CoA biosynthesis; malonyl-CoA from acetyl-CoA: step 1/1. In terms of biological role, component of the acetyl coenzyme A carboxylase (ACC) complex. Biotin carboxylase (BC) catalyzes the carboxylation of biotin on its carrier protein (BCCP) and then the CO(2) group is transferred by the transcarboxylase to acetyl-CoA to form malonyl-CoA. This Lactiplantibacillus plantarum (strain ATCC BAA-793 / NCIMB 8826 / WCFS1) (Lactobacillus plantarum) protein is Acetyl-coenzyme A carboxylase carboxyl transferase subunit beta 1.